A 264-amino-acid polypeptide reads, in one-letter code: tRNA (guanine-N(1)-)-methyltransferase (264 aa).

S-adenosyl-L-methionine contacts are provided by residues Gly-133 and Leu-152–Met-157. Over residues Gln-240–Gly-251 the composition is skewed to basic and acidic residues. A disordered region spans residues Gln-240–Arg-264. The span at Pro-255–Arg-264 shows a compositional bias: acidic residues.

The protein belongs to the RNA methyltransferase TrmD family. As to quaternary structure, homodimer.

The protein resides in the cytoplasm. The catalysed reaction is guanosine(37) in tRNA + S-adenosyl-L-methionine = N(1)-methylguanosine(37) in tRNA + S-adenosyl-L-homocysteine + H(+). In terms of biological role, specifically methylates guanosine-37 in various tRNAs. This chain is tRNA (guanine-N(1)-)-methyltransferase, found in Sorangium cellulosum (strain So ce56) (Polyangium cellulosum (strain So ce56)).